A 108-amino-acid chain; its full sequence is UPF0060 membrane protein CKO_01576 (108 aa).

4 helical membrane-spanning segments follow: residues 6–26 (LLFFMTALCEIVGCFLPWLWL), 29–49 (GATAWLLVPAGVSLALFVWLL), 61–81 (AAYGGVYVCTALLWLRFVDGV), and 85–105 (LYDWSGALIALCGMLIIVAGW).

Belongs to the UPF0060 family.

Its subcellular location is the cell inner membrane. In Citrobacter koseri (strain ATCC BAA-895 / CDC 4225-83 / SGSC4696), this protein is UPF0060 membrane protein CKO_01576.